A 1108-amino-acid polypeptide reads, in one-letter code: Isoleucine--tRNA ligase (1108 aa).

The 'HIGH' region motif lies at 53 to 63 (PFANGLPHYGH). A 'KMSKS' region motif is present at residues 654–658 (KLSKR). Residue Lys657 participates in ATP binding.

The protein belongs to the class-I aminoacyl-tRNA synthetase family. IleS type 2 subfamily. As to quaternary structure, monomer. Requires Zn(2+) as cofactor.

It localises to the cytoplasm. The catalysed reaction is tRNA(Ile) + L-isoleucine + ATP = L-isoleucyl-tRNA(Ile) + AMP + diphosphate. Catalyzes the attachment of isoleucine to tRNA(Ile). As IleRS can inadvertently accommodate and process structurally similar amino acids such as valine, to avoid such errors it has two additional distinct tRNA(Ile)-dependent editing activities. One activity is designated as 'pretransfer' editing and involves the hydrolysis of activated Val-AMP. The other activity is designated 'posttransfer' editing and involves deacylation of mischarged Val-tRNA(Ile). The polypeptide is Isoleucine--tRNA ligase (Rickettsia bellii (strain OSU 85-389)).